The following is a 204-amino-acid chain: uncharacterized protein (204 aa).

This is an uncharacterized protein from Saccharomyces cerevisiae (strain ATCC 204508 / S288c) (Baker's yeast).